Reading from the N-terminus, the 637-residue chain is 1,4-alpha-glucan branching enzyme GlgB (637 aa).

Asp-307 acts as the Nucleophile in catalysis. Glu-361 functions as the Proton donor in the catalytic mechanism.

It belongs to the glycosyl hydrolase 13 family. GlgB subfamily. As to quaternary structure, monomer.

The enzyme catalyses Transfers a segment of a (1-&gt;4)-alpha-D-glucan chain to a primary hydroxy group in a similar glucan chain.. Its pathway is glycan biosynthesis; glycogen biosynthesis. Functionally, catalyzes the formation of the alpha-1,6-glucosidic linkages in glycogen by scission of a 1,4-alpha-linked oligosaccharide from growing alpha-1,4-glucan chains and the subsequent attachment of the oligosaccharide to the alpha-1,6 position. In Oceanobacillus iheyensis (strain DSM 14371 / CIP 107618 / JCM 11309 / KCTC 3954 / HTE831), this protein is 1,4-alpha-glucan branching enzyme GlgB.